The sequence spans 104 residues: Large ribosomal subunit protein uL15z (104 aa).

Belongs to the universal ribosomal protein uL15 family.

In Arabidopsis thaliana (Mouse-ear cress), this protein is Large ribosomal subunit protein uL15z (RPL27AA).